Here is a 502-residue protein sequence, read N- to C-terminus: Lysine--tRNA ligase (502 aa).

Residues Glu398 and Glu405 each contribute to the Mg(2+) site.

This sequence belongs to the class-II aminoacyl-tRNA synthetase family. Homodimer. The cofactor is Mg(2+).

The protein resides in the cytoplasm. The catalysed reaction is tRNA(Lys) + L-lysine + ATP = L-lysyl-tRNA(Lys) + AMP + diphosphate. This Thermosipho africanus (strain TCF52B) protein is Lysine--tRNA ligase.